A 377-amino-acid chain; its full sequence is MSRGIIIIGSGFAARQLVKNIRKQDAHVPLTLIAADSMDEYNKPDLSHVISQSQRADDLTRQLAGEFAEQFNLRRFPHTWVADIDADAHVVKSQDKQWQYDKLVLATGATAFVPPIAGRELMLTLNSQQEYRACETQLRDAQRVLIVGGGLIGSELAMDFCRAGKTVTLMDNAASLLASLMPPEVSSRLQHHLTDMGVHLLLKSQLQKLEKTEAGIRATLVSQHSIEVDAVIAATGLRPETALARRAGVAVNRGVCVDSYLQTSHPDIYAIGDCAEINGQVLPFLQPIQLSAMYLAKNLLGGNAPLKLPAMLVKVKTPELPLHLAGETQRRDLSWHITAESDGMIAKGMSGEGQLRAFVVSEDRMKEAFALLKTLSV.

This sequence belongs to the FAD-dependent oxidoreductase family. Requires FAD as cofactor.

The protein localises to the cytoplasm. The enzyme catalyses 2 reduced [nitric oxide reductase rubredoxin domain] + NAD(+) + H(+) = 2 oxidized [nitric oxide reductase rubredoxin domain] + NADH. It functions in the pathway nitrogen metabolism; nitric oxide reduction. Functionally, one of at least two accessory proteins for anaerobic nitric oxide (NO) reductase. Reduces the rubredoxin moiety of NO reductase. The polypeptide is Nitric oxide reductase FlRd-NAD(+) reductase (Salmonella typhimurium (strain LT2 / SGSC1412 / ATCC 700720)).